A 369-amino-acid polypeptide reads, in one-letter code: Cobalt-precorrin-5B C(1)-methyltransferase (369 aa).

The protein belongs to the CbiD family.

It carries out the reaction Co-precorrin-5B + S-adenosyl-L-methionine = Co-precorrin-6A + S-adenosyl-L-homocysteine. Its pathway is cofactor biosynthesis; adenosylcobalamin biosynthesis; cob(II)yrinate a,c-diamide from sirohydrochlorin (anaerobic route): step 6/10. In terms of biological role, catalyzes the methylation of C-1 in cobalt-precorrin-5B to form cobalt-precorrin-6A. The protein is Cobalt-precorrin-5B C(1)-methyltransferase of Brucella melitensis biotype 1 (strain ATCC 23456 / CCUG 17765 / NCTC 10094 / 16M).